The following is a 464-amino-acid chain: 3-isopropylmalate dehydratase large subunit (464 aa).

Residues C337, C397, and C400 each contribute to the [4Fe-4S] cluster site.

Belongs to the aconitase/IPM isomerase family. LeuC type 1 subfamily. Heterodimer of LeuC and LeuD. [4Fe-4S] cluster serves as cofactor.

The catalysed reaction is (2R,3S)-3-isopropylmalate = (2S)-2-isopropylmalate. It participates in amino-acid biosynthesis; L-leucine biosynthesis; L-leucine from 3-methyl-2-oxobutanoate: step 2/4. Catalyzes the isomerization between 2-isopropylmalate and 3-isopropylmalate, via the formation of 2-isopropylmaleate. This is 3-isopropylmalate dehydratase large subunit from Bacillus cereus (strain G9842).